The primary structure comprises 301 residues: Sulfate adenylyltransferase subunit 2 (301 aa).

Positions 279–301 (RQGRLIDRDEAGSMEKKKREGYF) are disordered.

The protein belongs to the PAPS reductase family. CysD subfamily. Heterodimer composed of CysD, the smaller subunit, and CysN.

The enzyme catalyses sulfate + ATP + H(+) = adenosine 5'-phosphosulfate + diphosphate. It participates in sulfur metabolism; hydrogen sulfide biosynthesis; sulfite from sulfate: step 1/3. Its function is as follows. With CysN forms the ATP sulfurylase (ATPS) that catalyzes the adenylation of sulfate producing adenosine 5'-phosphosulfate (APS) and diphosphate, the first enzymatic step in sulfur assimilation pathway. APS synthesis involves the formation of a high-energy phosphoric-sulfuric acid anhydride bond driven by GTP hydrolysis by CysN coupled to ATP hydrolysis by CysD. The sequence is that of Sulfate adenylyltransferase subunit 2 from Mesorhizobium japonicum (strain LMG 29417 / CECT 9101 / MAFF 303099) (Mesorhizobium loti (strain MAFF 303099)).